The chain runs to 2209 residues: Orsellinic acid synthase armB (2209 aa).

Residues 38–261 (LLLDACYYAF…HKTTVDALYH (224 aa)) are N-terminal acylcarrier protein transacylase domain (SAT). A Ketosynthase family 3 (KS3) domain is found at 391–817 (QEPIAICGMS…GSNGALLLEE (427 aa)). Residues C561, H696, and H736 each act as for beta-ketoacyl synthase activity in the active site. The segment at 914-1239 (VFVFSGQGGQ…NLTLSSSLSQ (326 aa)) is malonyl-CoA:ACP transacylase (MAT) domain. The active-site For acyl/malonyl transferase activity is S1008. The interval 1306 to 1436 (MLQSWAQFPS…GQFRPLLVAD (131 aa)) is N-terminal hotdog fold. The PKS/mFAS DH domain maps to 1306–1613 (MLQSWAQFPS…FKKLRLNTLQ (308 aa)). A product template (PT) domain region spans residues 1335–1610 (ITGHIVGDVP…GMCFKKLRLN (276 aa)). H1338 functions as the Proton acceptor; for dehydratase activity in the catalytic mechanism. The tract at residues 1463-1613 (AEVITTRTAY…FKKLRLNTLQ (151 aa)) is C-terminal hotdog fold. D1524 serves as the catalytic Proton donor; for dehydratase activity. Carrier domains are found at residues 1659 to 1734 (VDVQ…SSTI) and 1844 to 1921 (SSSS…SSKQ). O-(pantetheine 4'-phosphoryl)serine is present on residues S1693 and S1881. The tract at residues 1917-1945 (ISSKQPGKSPKPSEEATMDPDKEEDLSDL) is disordered. Residues 1932–1943 (ATMDPDKEEDLS) show a composition bias toward acidic residues. Residues 1962–2201 (VPMSVQKSSS…LGAVTQALVD (240 aa)) form a thioesterase (TE) domain region.

It catalyses the reaction 3 malonyl-CoA + acetyl-CoA + 2 H(+) = orsellinate + 3 CO2 + 4 CoA. The protein operates within secondary metabolite biosynthesis. Non-reducing polyketide synthase, part of the gene cluster that mediates the biosynthesis of melleolides, a range of antifungal and phytotoxic polyketide derivatives composed of an orsellinic acid (OA) moiety esterified to various sesquiterpene alcohols. The first step in melleolides biosynthesis is performed by the delta(6)-protoilludene synthase PRO1 which catalyzes the cyclization of farnesyl diphosphate to protoilludene. The orsellinic acid synthase armB produces OA by condensing acetyl-CoA with 3 malonyl-CoA units in a three-round chain elongation reaction folowed by a C2-C7 ring closure. ArmB further catalyzes the trans-esterification of OA to the various sesquiterpene alcohols resulting from the hydroxylation of protoilludene. The melleolides cluster also includes 5 cytochrome P450 monooxygenases, 4 NAD(+)-dependent oxidoreductases, one flavin-dependent oxidoreductase, and one O-methyltransferase. The cytochrome P450 monooxygenases may be involved in protoilludene hydroxylation to elaborate melleolides with multiple alcohol groups, such as melleolide D, which carries alcohol functionalities at C-4, C-5, C-10, and C-13. The role of the NAD(+)-dependent enzymes remains unknown. Numerous melleolides, including arnamial, show 5'-O-methylation of the aromatic moiety which may be catalyzed by the methyltransferase encoded in the cluster. The flavin-dependent oxidoreductase might represent the dehydrogenase yielding the aldehyde in position 1 of arnamial and other melleolides. Finally, several halogenase localized outside of the cluster (armH1 to armH5), are able to catalyze the transfer of a single chlorine atom to the melleolide backbone, resulting in a 6'-chloromelleolide product. This Armillaria mellea (Honey mushroom) protein is Orsellinic acid synthase armB.